The primary structure comprises 145 residues: Superoxide dismutase [Mn/Fe] (145 aa).

Fe(3+) contacts are provided by His10 and His64. Positions 10 and 64 each coordinate Mn(2+).

Belongs to the iron/manganese superoxide dismutase family. Mn(2+) serves as cofactor. Requires Fe(3+) as cofactor.

The enzyme catalyses 2 superoxide + 2 H(+) = H2O2 + O2. In terms of biological role, destroys superoxide anion radicals which are normally produced within the cells and which are toxic to biological systems. Catalyzes the dismutation of superoxide anion radicals into O2 and H2O2 by successive reduction and oxidation of the transition metal ion at the active site. The polypeptide is Superoxide dismutase [Mn/Fe] (sodA) (Streptococcus parasanguinis).